Reading from the N-terminus, the 432-residue chain is Keratin, type I cytoskeletal 18-B (432 aa).

Residues 1 to 21 (MSYSRSMYSSSSVVGGSPYRS) show a composition bias toward low complexity. A disordered region spans residues 1–44 (MSYSRSMYSSSSVVGGSPYRSLSSAPRFAPGSSAASVHAGPGGS). The head stretch occupies residues 2–82 (SYSRSMYSSS…NVSLMGGAQN (81 aa)). The segment at 83–118 (EKETMQDLNDRLASYLERVRSLETANKELEVQIRQH) is coil 1A. The IF rod domain maps to 83–393 (EKETMQDLND…RLLEGDSFDL (311 aa)). Residues 119–134 (TEKKGPAKDWSPYYKA) are linker 1. Residues 135-226 (IEDLKKQVFD…KNHQDDVNEL (92 aa)) form a coil 1B region. Residues 227 to 250 (QAQIARSAVTVEVDAPKSQDLGKI) form a linker 12 region. Residues 251–388 (MAELRAQYDG…IHTYRRLLEG (138 aa)) are coil 2. Residues 389 to 432 (DSFDLQDAVPTVTTQTVKKVITTTQRIVDGKVVAESNDTEVLKA) are tail.

This sequence belongs to the intermediate filament family. As to quaternary structure, heterotetramer of two type I and two type II keratins. Keratin-18 associates with keratin-8. Phosphorylated. In terms of processing, proteolytically cleaved by caspases during epithelial cell apoptosis.

Functionally, when phosphorylated, plays a role in filament reorganization. This is Keratin, type I cytoskeletal 18-B (krt18-b) from Xenopus laevis (African clawed frog).